The primary structure comprises 169 residues: Ribosome maturation factor RimM (169 aa).

The PRC barrel domain maps to 97-169 (PGEYYWYQLI…VITVDWDMNF (73 aa)).

It belongs to the RimM family. As to quaternary structure, binds ribosomal protein uS19.

Its subcellular location is the cytoplasm. Functionally, an accessory protein needed during the final step in the assembly of 30S ribosomal subunit, possibly for assembly of the head region. Essential for efficient processing of 16S rRNA. May be needed both before and after RbfA during the maturation of 16S rRNA. It has affinity for free ribosomal 30S subunits but not for 70S ribosomes. This is Ribosome maturation factor RimM from Legionella pneumophila subsp. pneumophila (strain Philadelphia 1 / ATCC 33152 / DSM 7513).